A 96-amino-acid polypeptide reads, in one-letter code: Large ribosomal subunit protein uL23 (96 aa).

This sequence belongs to the universal ribosomal protein uL23 family. Part of the 50S ribosomal subunit. Contacts protein L29, and trigger factor when it is bound to the ribosome.

Its function is as follows. One of the early assembly proteins it binds 23S rRNA. One of the proteins that surrounds the polypeptide exit tunnel on the outside of the ribosome. Forms the main docking site for trigger factor binding to the ribosome. This is Large ribosomal subunit protein uL23 from Desulfovibrio desulfuricans (strain ATCC 27774 / DSM 6949 / MB).